The chain runs to 596 residues: Arginine--tRNA ligase (596 aa).

The 'HIGH' region motif lies at 139-149; sequence ANPTGPLHVGH.

This sequence belongs to the class-I aminoacyl-tRNA synthetase family. As to quaternary structure, monomer.

It localises to the cytoplasm. It carries out the reaction tRNA(Arg) + L-arginine + ATP = L-arginyl-tRNA(Arg) + AMP + diphosphate. In Paraburkholderia phytofirmans (strain DSM 17436 / LMG 22146 / PsJN) (Burkholderia phytofirmans), this protein is Arginine--tRNA ligase.